The chain runs to 1335 residues: Probable serine/threonine-protein kinase ndrC (1335 aa).

Disordered regions lie at residues 1 to 70, 85 to 158, 276 to 447, and 462 to 603; these read MSRK…KKGS, VDTH…LIPS, LPPP…SPLN, and TTTT…NNNK. The segment covering 8–17 has biased composition (polar residues); sequence NRSSSSNSIE. Positions 27–41 are enriched in low complexity; sequence SNISNSSNINCNNSS. A compositionally biased stretch (basic residues) spans 55-70; the sequence is RSKHSSPIHSLKKKGS. Residues 89 to 117 are compositionally biased toward low complexity; it reads SSSNSNNNSSSNNNNNNNNHNINSSSESS. Polar residues predominate over residues 118 to 132; it reads TPTTPRSSFTPQVTM. Positions 133–153 are enriched in low complexity; it reads NSNQSSGNNSPQLSSRSSSQS. Pro residues predominate over residues 276–288; it reads LPPPSQQQLPPPQ. 6 stretches are compositionally biased toward low complexity: residues 289-331, 345-368, 382-396, 412-424, 437-447, and 462-484; these read SHQQ…TPQS, NQQQ…SPNK, SPSP…SPSS, PTPL…SPSS, PSSFSGGSPLN, and TTTT…TTIS. A compositionally biased stretch (polar residues) spans 485 to 497; the sequence is NPNYTQNLPTTPL. A compositionally biased stretch (low complexity) spans 498–507; it reads SNSSSNNNNN. Residues 508–528 are compositionally biased toward polar residues; sequence GSFITLQDTTNNKSIINNNRE. Low complexity predominate over residues 540 to 566; that stretch reads SSGSSNTTSSTTNTTTPSSSSLTTSSG. Positions 567-581 are enriched in basic and acidic residues; that stretch reads KESRDRDSKDKEKDL. A compositionally biased stretch (low complexity) spans 586–602; sequence NNNNNNNNNNNNNNNNN. The stretch at 586-613 forms a coiled coil; that stretch reads NNNNNNNNNNNNNNNNNKVEKEKENYCK. Residues 718–1019 enclose the Protein kinase domain; the sequence is FKILTQIGKG…KQDFKNHPFF (302 aa). ATP contacts are provided by residues 724-732 and K747; that span reads IGKGGFGQV. The active-site Proton acceptor is D840. Residues 1020–1106 form the AGC-kinase C-terminal domain; it reads KNHNWDEIVN…RKSSALSLSM (87 aa). Residues 1239-1284 show a composition bias toward low complexity; the sequence is SQSQPSLANQLQSSSSSPSPSLQSQSQSPSLQSSSKSTPNLSSSLL. The interval 1239 to 1313 is disordered; the sequence is SQSQPSLANQ…IKKENESEEI (75 aa). Basic and acidic residues predominate over residues 1287-1313; the sequence is PVKEELEYKNQTENEVEIKKENESEEI. The stretch at 1289 to 1325 forms a coiled coil; the sequence is KEELEYKNQTENEVEIKKENESEEIQSLRDQLKEIII.

This sequence belongs to the protein kinase superfamily. AGC Ser/Thr protein kinase family.

The enzyme catalyses L-seryl-[protein] + ATP = O-phospho-L-seryl-[protein] + ADP + H(+). It catalyses the reaction L-threonyl-[protein] + ATP = O-phospho-L-threonyl-[protein] + ADP + H(+). The polypeptide is Probable serine/threonine-protein kinase ndrC (ndrC) (Dictyostelium discoideum (Social amoeba)).